Consider the following 117-residue polypeptide: NADH-quinone oxidoreductase subunit A (117 aa).

3 helical membrane-spanning segments follow: residues 4–24 (WIGV…GMLT), 64–84 (LMFV…VSFV), and 86–106 (LGLA…LGLW).

The protein belongs to the complex I subunit 3 family. NDH-1 is composed of 14 different subunits. Subunits NuoA, H, J, K, L, M, N constitute the membrane sector of the complex.

The protein localises to the cell membrane. The catalysed reaction is a quinone + NADH + 5 H(+)(in) = a quinol + NAD(+) + 4 H(+)(out). Its function is as follows. NDH-1 shuttles electrons from NADH, via FMN and iron-sulfur (Fe-S) centers, to quinones in the respiratory chain. The immediate electron acceptor for the enzyme in this species is believed to be a menaquinone. Couples the redox reaction to proton translocation (for every two electrons transferred, four hydrogen ions are translocated across the cytoplasmic membrane), and thus conserves the redox energy in a proton gradient. The protein is NADH-quinone oxidoreductase subunit A of Desulforamulus reducens (strain ATCC BAA-1160 / DSM 100696 / MI-1) (Desulfotomaculum reducens).